We begin with the raw amino-acid sequence, 356 residues long: Tetraacyldisaccharide 4'-kinase (356 aa).

An ATP-binding site is contributed by 67-74 (FVGGTGKT).

The protein belongs to the LpxK family.

It catalyses the reaction a lipid A disaccharide + ATP = a lipid IVA + ADP + H(+). It participates in glycolipid biosynthesis; lipid IV(A) biosynthesis; lipid IV(A) from (3R)-3-hydroxytetradecanoyl-[acyl-carrier-protein] and UDP-N-acetyl-alpha-D-glucosamine: step 6/6. Functionally, transfers the gamma-phosphate of ATP to the 4'-position of a tetraacyldisaccharide 1-phosphate intermediate (termed DS-1-P) to form tetraacyldisaccharide 1,4'-bis-phosphate (lipid IVA). In Herminiimonas arsenicoxydans, this protein is Tetraacyldisaccharide 4'-kinase.